Here is a 662-residue protein sequence, read N- to C-terminus: FAST kinase domain-containing protein 3, mitochondrial (662 aa).

In terms of domain architecture, RAP spans isoleucine 591 to arginine 649.

It belongs to the FAST kinase family. Expression detected in spleen, thymus, testis, ovary, colon, heart, smooth muscle, kidney, brain, lung, liver and white adipose tissue with highest expression in liver and thyroid.

The protein localises to the mitochondrion. In terms of biological role, required for normal mitochondrial respiration. Increases steady-state levels and half-lives of a subset of mature mitochondrial mRNAs MT-ND2, MT-ND3, MT-CYTB, MT-CO2, and MT-ATP8/6. Promotes MT-CO1 mRNA translation and increases mitochondrial complex IV assembly and activity. The polypeptide is FAST kinase domain-containing protein 3, mitochondrial (FASTKD3) (Homo sapiens (Human)).